Consider the following 219-residue polypeptide: Cytidylate kinase (219 aa).

11–19 lines the ATP pocket; the sequence is GTAGSGKTA.

This sequence belongs to the cytidylate kinase family. Type 1 subfamily.

Its subcellular location is the cytoplasm. The enzyme catalyses CMP + ATP = CDP + ADP. It catalyses the reaction dCMP + ATP = dCDP + ADP. This Mesoplasma florum (strain ATCC 33453 / NBRC 100688 / NCTC 11704 / L1) (Acholeplasma florum) protein is Cytidylate kinase.